The chain runs to 414 residues: Protein phosphatase 2C homolog 3 (414 aa).

The region spanning 23-288 (LYGLSSMQGW…DNMTVCIVAL (266 aa)) is the PPM-type phosphatase domain. Positions 62, 63, 230, and 279 each coordinate Mn(2+). Disordered stretches follow at residues 313–368 (APPE…TNGS) and 380–414 (FPHK…SAAD). Residues 350–363 (GYDKDANENSKEDD) are compositionally biased toward basic and acidic residues. Over residues 390-400 (SSETDIVNSNK) the composition is skewed to polar residues. Over residues 401 to 414 (DVADDHKEAVSAAD) the composition is skewed to basic and acidic residues.

The protein belongs to the PP2C family. In terms of assembly, monomer. The cofactor is Mg(2+). It depends on Mn(2+) as a cofactor.

Its subcellular location is the cytoplasm. The protein localises to the nucleus. It catalyses the reaction O-phospho-L-seryl-[protein] + H2O = L-seryl-[protein] + phosphate. The enzyme catalyses O-phospho-L-threonyl-[protein] + H2O = L-threonyl-[protein] + phosphate. In terms of biological role, dephosphorylating regulator for many key proteins. Has an important role in osmotic stability and cell shape control. It may negatively regulate the osmosensing signal transmitted through wis1 map kinase. The sequence is that of Protein phosphatase 2C homolog 3 (ptc3) from Schizosaccharomyces pombe (strain 972 / ATCC 24843) (Fission yeast).